The chain runs to 309 residues: Dihydroorotate dehydrogenase B (NAD(+)), catalytic subunit (309 aa).

FMN-binding positions include serine 21 and 45–46 (KA). Residues lysine 45 and 69-73 (NAIGL) contribute to the substrate site. Asparagine 99 and asparagine 127 together coordinate FMN. Residue asparagine 127 coordinates substrate. Catalysis depends on cysteine 130, which acts as the Nucleophile. Lysine 165 and isoleucine 191 together coordinate FMN. 192-193 (NT) contacts substrate. FMN-binding positions include glycine 217, 243–244 (GG), and 265–266 (GT).

The protein belongs to the dihydroorotate dehydrogenase family. Type 1 subfamily. Heterotetramer of 2 PyrK and 2 PyrD type B subunits. It depends on FMN as a cofactor.

It localises to the cytoplasm. The catalysed reaction is (S)-dihydroorotate + NAD(+) = orotate + NADH + H(+). The protein operates within pyrimidine metabolism; UMP biosynthesis via de novo pathway; orotate from (S)-dihydroorotate (NAD(+) route): step 1/1. Its function is as follows. Catalyzes the conversion of dihydroorotate to orotate with NAD(+) as electron acceptor. The sequence is that of Dihydroorotate dehydrogenase B (NAD(+)), catalytic subunit (pyrD) from Exiguobacterium sibiricum (strain DSM 17290 / CCUG 55495 / CIP 109462 / JCM 13490 / 255-15).